A 295-amino-acid chain; its full sequence is SPX domain-containing protein 1 (295 aa).

An SPX domain is found at M1–Q166. Residues L199 to G227 form a disordered region. Positions E204 to P216 are enriched in basic and acidic residues.

In terms of assembly, interacts (via SPX domain) with PHR2 (via C-terminus). Interacts with RLI1 in the nucleus to prevents its positive regulation of leaf inclination during phosphate (Pi) starvation. Predominantly expressed in roots and leaves. Localized in leaves lamina joints.

Its subcellular location is the nucleus. Functionally, involved in plant adaptation to phosphate (Pi) starvation. Inhibits PHR2 DNA-binding activity via a Pi-dependent protein interaction. Suppresses the regulation on expression of PT2 by PHR2 and accumulation of shoot Pi. Optimizes growth under phosphate-limited conditions through a negative feedback loop of the PSI (phosphate starvation-induced) signaling pathway. Regulates the expression of SPX2, SPX3 and SPX5. May be an important link between signal transduction pathways related to phosphate starvation and cold stress. Together with SPX2, plays a negative role in the regulation of leaf inclination by preventing RLI1 transcription factor activity in Pi depleted conditions. This is SPX domain-containing protein 1 from Oryza sativa subsp. japonica (Rice).